The chain runs to 507 residues: L-threonine dehydratase biosynthetic IlvA (507 aa).

K52 is subject to N6-(pyridoxal phosphate)lysine. Pyridoxal 5'-phosphate contacts are provided by residues N79, 182-186 (GGGGL), and S309. 2 ACT-like domains span residues 333 to 404 (AVFA…DLTH) and 427 to 498 (RLFR…EESA).

It belongs to the serine/threonine dehydratase family. In terms of assembly, homotetramer. The cofactor is pyridoxal 5'-phosphate.

It carries out the reaction L-threonine = 2-oxobutanoate + NH4(+). It functions in the pathway amino-acid biosynthesis; L-isoleucine biosynthesis; 2-oxobutanoate from L-threonine: step 1/1. Its function is as follows. Catalyzes the anaerobic formation of alpha-ketobutyrate and ammonia from threonine in a two-step reaction. The first step involved a dehydration of threonine and a production of enamine intermediates (aminocrotonate), which tautomerizes to its imine form (iminobutyrate). Both intermediates are unstable and short-lived. The second step is the nonenzymatic hydrolysis of the enamine/imine intermediates to form 2-ketobutyrate and free ammonia. In the low water environment of the cell, the second step is accelerated by RidA. This Burkholderia multivorans (strain ATCC 17616 / 249) protein is L-threonine dehydratase biosynthetic IlvA (ilvA).